Here is a 170-residue protein sequence, read N- to C-terminus: Lipoprotein signal peptidase (170 aa).

The next 3 membrane-spanning stretches (helical) occupy residues 9 to 29 (FNIFIFIISLIFFDQLSKYLV), 72 to 92 (IFFLAMPIFILIFIFSLSLKE), and 96 to 118 (IARISLLLIFSGGVGNVIDRLFR). Active-site residues include aspartate 124 and aspartate 146. A helical transmembrane segment spans residues 143 to 163 (NFADSYVVIGMILFLVYDFFI).

It belongs to the peptidase A8 family.

It localises to the cell inner membrane. The catalysed reaction is Release of signal peptides from bacterial membrane prolipoproteins. Hydrolyzes -Xaa-Yaa-Zaa-|-(S,diacylglyceryl)Cys-, in which Xaa is hydrophobic (preferably Leu), and Yaa (Ala or Ser) and Zaa (Gly or Ala) have small, neutral side chains.. It functions in the pathway protein modification; lipoprotein biosynthesis (signal peptide cleavage). In terms of biological role, this protein specifically catalyzes the removal of signal peptides from prolipoproteins. This Borreliella afzelii (strain PKo) (Borrelia afzelii) protein is Lipoprotein signal peptidase.